Reading from the N-terminus, the 414-residue chain is Esterase FrsA (414 aa).

Belongs to the FrsA family.

The catalysed reaction is a carboxylic ester + H2O = an alcohol + a carboxylate + H(+). In terms of biological role, catalyzes the hydrolysis of esters. This chain is Esterase FrsA, found in Escherichia coli (strain K12 / DH10B).